The primary structure comprises 103 residues: Cytotoxin-like protein TA-BMBGT3 (103 aa).

Residues 1 to 21 form the signal peptide; sequence MKTLLLTLVVVTIICLDLGYT. 5 cysteine pairs are disulfide-bonded: Cys24/Cys45, Cys27/Cys37, Cys38/Cys72, Cys76/Cys90, and Cys91/Cys96.

Belongs to the three-finger toxin family. Ancestral subfamily. Orphan group XVII sub-subfamily. As to expression, expressed by the venom gland.

The protein resides in the secreted. The polypeptide is Cytotoxin-like protein TA-BMBGT3 (Bungarus multicinctus (Many-banded krait)).